We begin with the raw amino-acid sequence, 64 residues long: Ferredoxin-2 (64 aa).

2 4Fe-4S ferredoxin-type domains span residues lysine 3–alanine 31 and tyrosine 34–glutamate 64. [4Fe-4S] cluster is bound by residues cysteine 12, cysteine 15, cysteine 18, and cysteine 54.

Homodimer. It depends on [4Fe-4S] cluster as a cofactor.

Ferredoxins are iron-sulfur proteins that transfer electrons in a wide variety of metabolic reactions. This is Ferredoxin-2 from Nitratidesulfovibrio vulgaris (strain DSM 19637 / Miyazaki F) (Desulfovibrio vulgaris).